The chain runs to 405 residues: Phosphatidylinositol 5-phosphate 4-kinase type-2 alpha (405 aa).

The PIPK domain occupies 32-404 (ASDPLLSVLM…RFLDFIANIL (373 aa)). The interval 287–326 (QEEVECEENDGEDEGESDGTHPIGTPPDSPGNTLNSSLPL) is disordered. Positions 288 to 303 (EEVECEENDGEDEGES) are enriched in acidic residues.

In terms of assembly, homodimer. Post-translationally, phosphorylated in tyrosines. Phosphorylation is induced by light and increases kinase activity.

Its subcellular location is the cell membrane. It is found in the nucleus. The protein localises to the lysosome. The protein resides in the cytoplasm. The enzyme catalyses a 1,2-diacyl-sn-glycero-3-phospho-(1D-myo-inositol-5-phosphate) + ATP = a 1,2-diacyl-sn-glycero-3-phospho-(1D-myo-inositol-4,5-bisphosphate) + ADP + H(+). The catalysed reaction is 1,2-dihexadecanoyl-sn-glycero-3-phospho-(1D-myo-inositol-5-phosphate) + ATP = 1,2-dihexadecanoyl-sn-glycero-3-phospho-(1D-myo-inositol-4,5-bisphosphate) + ADP + H(+). It catalyses the reaction 1,2-dihexadecanoyl-sn-glycero-3-phospho-(1D-myo-inositol-5-phosphate) + GTP = 1,2-dihexadecanoyl-sn-glycero-3-phospho-(1D-myo-inositol-4,5-bisphosphate) + GDP + H(+). Its activity is regulated as follows. In rod outer segments, activated by light. Catalyzes the phosphorylation of phosphatidylinositol 5-phosphate (PtdIns5P) on the fourth hydroxyl of the myo-inositol ring, to form phosphatidylinositol 4,5-bisphosphate (PtdIns(4,5)P2). Has both ATP- and GTP-dependent kinase activities. The sequence is that of Phosphatidylinositol 5-phosphate 4-kinase type-2 alpha (PIP4K2A) from Gallus gallus (Chicken).